The chain runs to 916 residues: Inter-alpha-trypsin inhibitor heavy chain H4 (916 aa).

The signal sequence occupies residues 1–27; sequence MKTPAPGRIHSIVLVLLSLAVLQTSKA. The 122-residue stretch at 28–149 folds into the VIT domain; that stretch reads QKVQNDIDIY…KVTFELVYEE (122 aa). Residues N82 and N208 are each glycosylated (N-linked (GlcNAc...) asparagine). A VWFA domain is found at 275-458; the sequence is NVIFVIDKSG…LQLQDFYQEV (184 aa). N-linked (GlcNAc...) asparagine glycosylation occurs at N518. Disordered regions lie at residues 597-616 and 678-701; these read PEGQEQSQVAEKPVEDESRG and PLAPASAPSPTSGPGGASHDTDFR. Over residues 678-689 the composition is skewed to low complexity; the sequence is PLAPASAPSPTS. O-linked (GalNAc...) serine glycosylation occurs at S683. T705, T706, and T708 each carry an O-linked (GalNAc...) threonine glycan. The cysteines at positions 733 and 911 are disulfide-linked.

The protein belongs to the ITIH family. As to quaternary structure, interacts (via C-terminus) with DNAJC1 (via SANT 2 domain). Post-translationally, appears to be both N- and O-glycosylated.

It is found in the secreted. In terms of biological role, type II acute-phase protein (APP) involved in inflammatory responses to trauma. May also play a role in liver development or regeneration. The sequence is that of Inter-alpha-trypsin inhibitor heavy chain H4 (ITIH4) from Bos taurus (Bovine).